The sequence spans 529 residues: Structure-specific endonuclease subunit SLX1 homolog 1 (529 aa).

The GIY-YIG domain occupies 4–89; that stretch reads RFHCVYLLTS…PTKSTRLKTQ (86 aa). The SLX1-type zinc finger occupies 231–364; the sequence is CALCSLPLRS…PCQPCPCPLC (134 aa). Disordered stretches follow at residues 275–305, 409–437, and 470–501; these read VTMG…MDAH, NSSL…YCGD, and SVSL…RMTD. Basic and acidic residues predominate over residues 282–297; sequence RNERSGEYSNKIKDDS.

The protein belongs to the SLX1 family. Forms a heterodimer with a member of the SLX4 family. It depends on a divalent metal cation as a cofactor.

Its subcellular location is the nucleus. In terms of biological role, catalytic subunit of a heterodimeric structure-specific endonuclease that resolves DNA secondary structures generated during DNA repair and recombination. Has endonuclease activity towards branched DNA substrates, introducing single-strand cuts in duplex DNA close to junctions with ss-DNA. The sequence is that of Structure-specific endonuclease subunit SLX1 homolog 1 from Trypanosoma cruzi (strain CL Brener).